The following is a 447-amino-acid chain: GTPase Der (447 aa).

EngA-type G domains lie at 4–165 and 180–357; these read QIIT…PEEE and LQIV…KIWN. GTP-binding positions include 10–17, 57–61, 119–122, 186–193, 233–237, and 298–301; these read GRPNVGKS, DTPGL, NKCE, GRPNAGKS, DTAGL, and NKWD. Residues 358-443 form the KH-like domain; sequence KKITTSKLNE…PIRFTYVKTK (86 aa).

Belongs to the TRAFAC class TrmE-Era-EngA-EngB-Septin-like GTPase superfamily. EngA (Der) GTPase family. In terms of assembly, associates with the 50S ribosomal subunit.

Its function is as follows. GTPase that plays an essential role in the late steps of ribosome biogenesis. This is GTPase Der from Rickettsia rickettsii (strain Iowa).